Consider the following 520-residue polypeptide: Serine/threonine-protein kinases drp72 (520 aa).

The 262-residue stretch at 20–281 (YTLQWIVGHG…NELARAVSAV (262 aa)) folds into the Protein kinase domain. Residues 26–34 (VGHGGMSTV) and Lys-49 each bind ATP. Asp-148 acts as the Proton acceptor in catalysis. Disordered regions lie at residues 315–334 (ARPT…RQEK) and 366–504 (SGDS…DAAD). Positions 374 to 394 (TPETITQTVTPTETTTSEEPT) are enriched in low complexity. Positions 395–411 (LAPPPVQPTRQPVPTPD) are enriched in pro residues. Over residues 416 to 429 (RLPTTTQESPTRVS) the composition is skewed to polar residues. Over residues 440–449 (EQTTPGGQPP) the composition is skewed to low complexity. The segment covering 450-460 (LSTLPTSLGWQ) has biased composition (polar residues). Low complexity predominate over residues 469–484 (QGNPNTTGNPANPGTP). Residues 485 to 496 (GTTGGNGTGNAG) show a composition bias toward gly residues.

This sequence belongs to the protein kinase superfamily. Ser/Thr protein kinase family.

It catalyses the reaction L-seryl-[protein] + ATP = O-phospho-L-seryl-[protein] + ADP + H(+). It carries out the reaction L-threonyl-[protein] + ATP = O-phospho-L-threonyl-[protein] + ADP + H(+). The protein is Serine/threonine-protein kinases drp72 of Corynebacterium efficiens (strain DSM 44549 / YS-314 / AJ 12310 / JCM 11189 / NBRC 100395).